Reading from the N-terminus, the 81-residue chain is Small ribosomal subunit protein bS16 (81 aa).

The protein belongs to the bacterial ribosomal protein bS16 family.

The polypeptide is Small ribosomal subunit protein bS16 (Treponema denticola (strain ATCC 35405 / DSM 14222 / CIP 103919 / JCM 8153 / KCTC 15104)).